A 284-amino-acid chain; its full sequence is MQKRSKIVSILLDSLPHIKLFSGSTMVIKYGGAAQINPTLKEQFAIDIVLLYMLGIKPVIVHGGGKKITDLLGKLGIESKFVEGHRITCIDSMKIVEMVLSGDINKEITSFLNHHGVKAVGISGKDSSLLRAEPKDGGRFGYTGEVKEVKAEIIYNLLEKGFVPVIAPVAEGEEAGHPGYNINADTAASEIAKAIKARKVIFLTDTQGVLDGEGSLMESLTLSEVEENKRSGVINGGMIPKVDACVECVKGGVEKAHIIDGRVEHSLLLELFTSEGIGTEILRD.

Substrate is bound by residues 64–65, R86, and N181; that span reads GG.

This sequence belongs to the acetylglutamate kinase family. ArgB subfamily.

The protein localises to the cytoplasm. The enzyme catalyses N-acetyl-L-glutamate + ATP = N-acetyl-L-glutamyl 5-phosphate + ADP. It functions in the pathway amino-acid biosynthesis; L-arginine biosynthesis; N(2)-acetyl-L-ornithine from L-glutamate: step 2/4. In terms of biological role, catalyzes the ATP-dependent phosphorylation of N-acetyl-L-glutamate. This is Acetylglutamate kinase from Wolinella succinogenes (strain ATCC 29543 / DSM 1740 / CCUG 13145 / JCM 31913 / LMG 7466 / NCTC 11488 / FDC 602W) (Vibrio succinogenes).